We begin with the raw amino-acid sequence, 291 residues long: uncharacterized protein (291 aa).

Disordered stretches follow at residues 29–50 (SEKP…LRDS) and 168–291 (RKVK…AELK). Ser50 is subject to Phosphoserine. Composition is skewed to polar residues over residues 176-186 (NSKNPSKTGTP) and 205-217 (QKNS…SKLI). Positions 221–237 (YKDEWLQQQKAEADRRT) are enriched in basic and acidic residues. Over residues 280–291 (SSPSESTPAELK) the composition is skewed to polar residues.

This is an uncharacterized protein from Mus musculus (Mouse).